The sequence spans 182 residues: Probable phosphoheptose isomerase (182 aa).

Residues 29–182 (ISSAISSGNK…MICAMIDEKF (154 aa)) enclose the SIS domain. Residue 44-46 (NGG) coordinates substrate. The Zn(2+) site is built by histidine 53 and glutamate 57. Residues glutamate 57, 86–87 (ND), 112–114 (STS), serine 117, and glutamine 164 contribute to the substrate site. Zn(2+) is bound by residues glutamine 164 and histidine 172.

Belongs to the SIS family. GmhA subfamily. Zn(2+) serves as cofactor.

The protein localises to the cytoplasm. The catalysed reaction is 2 D-sedoheptulose 7-phosphate = D-glycero-alpha-D-manno-heptose 7-phosphate + D-glycero-beta-D-manno-heptose 7-phosphate. It functions in the pathway carbohydrate biosynthesis; D-glycero-D-manno-heptose 7-phosphate biosynthesis; D-glycero-alpha-D-manno-heptose 7-phosphate and D-glycero-beta-D-manno-heptose 7-phosphate from sedoheptulose 7-phosphate: step 1/1. Catalyzes the isomerization of sedoheptulose 7-phosphate in D-glycero-D-manno-heptose 7-phosphate. This chain is Probable phosphoheptose isomerase, found in Thermoplasma acidophilum (strain ATCC 25905 / DSM 1728 / JCM 9062 / NBRC 15155 / AMRC-C165).